The sequence spans 599 residues: ATP-binding cassette sub-family E member 1 (599 aa).

2 consecutive 4Fe-4S ferredoxin-type domains span residues 7–37 and 46–75; these read RIAI…MGKL and KIAW…IVNL. Lys20 is covalently cross-linked (Glycyl lysine isopeptide (Lys-Gly) (interchain with G-Cter in ubiquitin)). ABC transporter domains are found at residues 79 to 315 and 342 to 562; these read LEKE…FLDG and VKKM…LSQL. Residues 110 to 117 and 379 to 386 contribute to the ATP site; these read GTNGIGKS and GENGTGKT. Position 417 is a phosphoserine (Ser417). Thr550 is modified (phosphothreonine).

It belongs to the ABC transporter superfamily. ABCE family. In terms of assembly, (Microbial infection) Interacts with Chandipura virus matrix protein. As to quaternary structure, interacts with PINK1. Interacts with CNOT4. Interacts with PELO. Probably heterodimerizes with RNASEL; this interaction inhibits RNASEL. (Microbial infection) Interacts with HIV-1 proteins Vif and Gag. In terms of assembly, (Microbial infection) Interacts with HIV-2 protein Gag. Post-translationally, ubiquitinated by CNOT4. Ubiquitination mediates the recruitment of autophagy receptors to the mitochondrial outer membrane and initiates mitophagy.

The protein resides in the cytoplasm. It is found in the mitochondrion. It catalyses the reaction GTP + H2O = GDP + phosphate + H(+). It carries out the reaction ATP + H2O = ADP + phosphate + H(+). The catalysed reaction is CTP + H2O = CDP + phosphate + H(+). The enzyme catalyses UTP + H2O = UDP + phosphate + H(+). Nucleoside-triphosphatase (NTPase) involved in ribosome recycling by mediating ribosome disassembly. Able to hydrolyze ATP, GTP, UTP and CTP. Splits ribosomes into free 60S subunits and tRNA- and mRNA-bound 40S subunits. Acts either after canonical termination facilitated by release factors (ETF1/eRF1) or after recognition of stalled and vacant ribosomes by mRNA surveillance factors (PELO/Pelota). Involved in the No-Go Decay (NGD) pathway: recruited to stalled ribosomes by the Pelota-HBS1L complex, and drives the disassembly of stalled ribosomes, followed by degradation of damaged mRNAs as part of the NGD pathway. Also plays a role in quality control of translation of mitochondrial outer membrane-localized mRNA. As part of the PINK1-regulated signaling, ubiquitinated by CNOT4 upon mitochondria damage; this modification generates polyubiquitin signals that recruit autophagy receptors to the mitochondrial outer membrane and initiate mitophagy. RNASEL-specific protein inhibitor which antagonizes the binding of 2-5A (5'-phosphorylated 2',5'-linked oligoadenylates) to RNASEL. Negative regulator of the anti-viral effect of the interferon-regulated 2-5A/RNASEL pathway. Functionally, (Microbial infection) May act as a chaperone for post-translational events during HIV-1 capsid assembly. In terms of biological role, (Microbial infection) Plays a role in the down-regulation of the 2-5A/RNASEL pathway during encephalomyocarditis virus (EMCV) and HIV-1 infections. This chain is ATP-binding cassette sub-family E member 1 (ABCE1), found in Homo sapiens (Human).